We begin with the raw amino-acid sequence, 485 residues long: Isocitrate dehydrogenase [NADP], chloroplastic/mitochondrial (485 aa).

The transit peptide at 1 to 65 directs the protein to the chloroplast and mitochondrion; the sequence is MLNKLTHGVF…VQFHRASAVR (65 aa). Residues 147–149 and R154 each bind NADP(+); that span reads TIT. T149 serves as a coordination point for substrate. Substrate-binding positions include 166–172, R181, and R204; that span reads SPNGTIR. Position 323 (D323) interacts with Mn(2+). K331 contacts NADP(+). D346 is a binding site for Mn(2+). NADP(+) is bound by residues 381–386 and N399; that span reads GTVTRH.

The protein belongs to the isocitrate and isopropylmalate dehydrogenases family. It depends on Mg(2+) as a cofactor. Mn(2+) is required as a cofactor.

The protein localises to the plastid. The protein resides in the chloroplast. It localises to the mitochondrion. It catalyses the reaction D-threo-isocitrate + NADP(+) = 2-oxoglutarate + CO2 + NADPH. Its function is as follows. May be involved in response to oxidative stresses. The sequence is that of Isocitrate dehydrogenase [NADP], chloroplastic/mitochondrial from Arabidopsis thaliana (Mouse-ear cress).